We begin with the raw amino-acid sequence, 256 residues long: Peroxisomal membrane protein PMP30B (256 aa).

It belongs to the peroxin-11 family.

Its subcellular location is the peroxisome membrane. Functionally, involved in peroxisomal proliferation. Could participate in peroxisomal elongation or fission. May be involved in parceling of peroxisomes into regular quanta. This Candida boidinii (Yeast) protein is Peroxisomal membrane protein PMP30B (PEX11B).